Here is a 435-residue protein sequence, read N- to C-terminus: Histidine--tRNA ligase (435 aa).

It belongs to the class-II aminoacyl-tRNA synthetase family. As to quaternary structure, homodimer.

It localises to the cytoplasm. It catalyses the reaction tRNA(His) + L-histidine + ATP = L-histidyl-tRNA(His) + AMP + diphosphate + H(+). This chain is Histidine--tRNA ligase, found in Synechococcus sp. (strain ATCC 27144 / PCC 6301 / SAUG 1402/1) (Anacystis nidulans).